A 338-amino-acid polypeptide reads, in one-letter code: RNA 3'-terminal phosphate cyclase (338 aa).

ATP contacts are provided by residues Q103 and 283-287; that span reads YLADQ. H308 functions as the Tele-AMP-histidine intermediate in the catalytic mechanism.

Belongs to the RNA 3'-terminal cyclase family. Type 1 subfamily.

Its subcellular location is the cytoplasm. The catalysed reaction is a 3'-end 3'-phospho-ribonucleotide-RNA + ATP = a 3'-end 2',3'-cyclophospho-ribonucleotide-RNA + AMP + diphosphate. In terms of biological role, catalyzes the conversion of 3'-phosphate to a 2',3'-cyclic phosphodiester at the end of RNA. The mechanism of action of the enzyme occurs in 3 steps: (A) adenylation of the enzyme by ATP; (B) transfer of adenylate to an RNA-N3'P to produce RNA-N3'PP5'A; (C) and attack of the adjacent 2'-hydroxyl on the 3'-phosphorus in the diester linkage to produce the cyclic end product. The biological role of this enzyme is unknown but it is likely to function in some aspects of cellular RNA processing. The sequence is that of RNA 3'-terminal phosphate cyclase from Escherichia coli O127:H6 (strain E2348/69 / EPEC).